A 79-amino-acid chain; its full sequence is Dolichyl-diphosphooligosaccharide--protein glycosyltransferase subunit TMEM258 (79 aa).

Methionine 1 bears the N-acetylmethionine mark. 2 consecutive transmembrane segments (helical) span residues 17–37 and 59–79; these read VFPH…AWFF and VASL…GIYI.

It belongs to the OST5 family. In terms of assembly, component of the oligosaccharyltransferase (OST) complex. OST exists in two different complex forms which contain common core subunits RPN1, RPN2, OST48, OST4, DAD1 and TMEM258, either STT3A or STT3B as catalytic subunits, and form-specific accessory subunits. STT3A complex assembly occurs through the formation of 3 subcomplexes. Subcomplex 1 contains RPN1 and TMEM258, subcomplex 2 contains the STT3A-specific subunits STT3A, DC2/OSTC, and KCP2 as well as the core subunit OST4, and subcomplex 3 contains RPN2, DAD1, and OST48. The STT3A complex can form stable complexes with the Sec61 complex or with both the Sec61 and TRAP complexes.

The protein resides in the membrane. It is found in the endoplasmic reticulum. The protein localises to the cytoplasm. It participates in protein modification; protein glycosylation. Subunit of the oligosaccharyl transferase (OST) complex that catalyzes the initial transfer of a defined glycan (Glc(3)Man(9)GlcNAc(2) in eukaryotes) from the lipid carrier dolichol-pyrophosphate to an asparagine residue within an Asn-X-Ser/Thr consensus motif in nascent polypeptide chains, the first step in protein N-glycosylation. N-glycosylation occurs cotranslationally and the complex associates with the Sec61 complex at the channel-forming translocon complex that mediates protein translocation across the endoplasmic reticulum (ER). All subunits are required for a maximal enzyme activity. Involved in ER homeostasis in the colonic epithelium. This Bos taurus (Bovine) protein is Dolichyl-diphosphooligosaccharide--protein glycosyltransferase subunit TMEM258.